The sequence spans 344 residues: Glutamine synthetase (344 aa).

The region spanning 4 to 86 (YKLEYIWLDG…VMCEVMMPDG (83 aa)) is the GS beta-grasp domain. In terms of domain architecture, GS catalytic spans 89 to 344 (PHASNKRATI…SVPTEKKAVA (256 aa)). Mg(2+) contacts are provided by Glu-109 and Glu-111. ATP is bound at residue Glu-167. Positions 172 and 179 each coordinate Mg(2+). Glu-278 provides a ligand contact to L-glutamate.

The protein belongs to the glutamine synthetase family. As to quaternary structure, homooctamer and homotetramer. It depends on Mg(2+) as a cofactor.

It localises to the cytoplasm. The catalysed reaction is L-glutamate + NH4(+) + ATP = L-glutamine + ADP + phosphate + H(+). Functionally, catalyzes the ATP-dependent biosynthesis of glutamine from glutamate and ammonia. In Bradyrhizobium diazoefficiens (strain JCM 10833 / BCRC 13528 / IAM 13628 / NBRC 14792 / USDA 110), this protein is Glutamine synthetase.